The following is a 269-amino-acid chain: Shikimate dehydrogenase (NADP(+)) (269 aa).

Shikimate-binding positions include 15–17 (SLS) and T62. K66 functions as the Proton acceptor in the catalytic mechanism. 2 residues coordinate shikimate: N86 and D100. NADP(+)-binding positions include 124 to 128 (GAGGA), 147 to 152 (NRTPER), and I211. Position 213 (Y213) interacts with shikimate. G234 contributes to the NADP(+) binding site.

It belongs to the shikimate dehydrogenase family. As to quaternary structure, homodimer.

The catalysed reaction is shikimate + NADP(+) = 3-dehydroshikimate + NADPH + H(+). Its pathway is metabolic intermediate biosynthesis; chorismate biosynthesis; chorismate from D-erythrose 4-phosphate and phosphoenolpyruvate: step 4/7. Involved in the biosynthesis of the chorismate, which leads to the biosynthesis of aromatic amino acids. Catalyzes the reversible NADPH linked reduction of 3-dehydroshikimate (DHSA) to yield shikimate (SA). This chain is Shikimate dehydrogenase (NADP(+)), found in Methanococcoides burtonii (strain DSM 6242 / NBRC 107633 / OCM 468 / ACE-M).